Consider the following 137-residue polypeptide: Small ribosomal subunit protein uS11 (137 aa).

Residues 1–30 (MAQAKKGGAPKKGQKTRRREKKNVPHGAAH) are disordered. Residues 8–21 (GAPKKGQKTRRREK) show a composition bias toward basic residues.

The protein belongs to the universal ribosomal protein uS11 family. As to quaternary structure, part of the 30S ribosomal subunit. Interacts with proteins S7 and S18. Binds to IF-3.

Functionally, located on the platform of the 30S subunit, it bridges several disparate RNA helices of the 16S rRNA. Forms part of the Shine-Dalgarno cleft in the 70S ribosome. The protein is Small ribosomal subunit protein uS11 of Mycolicibacterium vanbaalenii (strain DSM 7251 / JCM 13017 / BCRC 16820 / KCTC 9966 / NRRL B-24157 / PYR-1) (Mycobacterium vanbaalenii).